Consider the following 137-residue polypeptide: Cofilin-1A (137 aa).

The ADF-H domain occupies 2 to 135 (SSGIALAPNC…KDSCFYEKCT (134 aa)).

This sequence belongs to the actin-binding proteins ADF family.

It is found in the nucleus matrix. The protein localises to the cytoplasm. Its subcellular location is the cytoskeleton. In terms of biological role, controls reversibly actin polymerization and depolymerization in a pH-sensitive manner. It has the ability to bind G- and F-actin in a 1:1 ratio of cofilin to actin. It is the major component of intranuclear and cytoplasmic actin rods. The protein is Cofilin-1A (cofA) of Dictyostelium discoideum (Social amoeba).